The following is a 249-amino-acid chain: tRNA pseudouridine synthase A (249 aa).

The active-site Nucleophile is D52. A substrate-binding site is contributed by Y110.

The protein belongs to the tRNA pseudouridine synthase TruA family. Homodimer.

It catalyses the reaction uridine(38/39/40) in tRNA = pseudouridine(38/39/40) in tRNA. Functionally, formation of pseudouridine at positions 38, 39 and 40 in the anticodon stem and loop of transfer RNAs. This Azobacteroides pseudotrichonymphae genomovar. CFP2 protein is tRNA pseudouridine synthase A.